Here is a 386-residue protein sequence, read N- to C-terminus: Zinc finger CCCH domain-containing protein 39 (386 aa).

The interval 1-90 (MDSSYSDSRP…SSSNPWMVPS (90 aa)) is disordered. The segment covering 20–37 (WNQTQMIDSMANPMNNEQ) has biased composition (polar residues). A compositionally biased stretch (low complexity) spans 43 to 58 (LSESQSQSQPSQQLQP). Polar residues predominate over residues 72–85 (NPASSFPQPSSSNP). The C3H1-type 1 zinc finger occupies 104-131 (FYKTRMCAKFRAGTCRNGELCNFAHGIE). The segment at 136–166 (PPSNWQEIVGPPPAGQDRERERERERERERP) is disordered. Residues 151–166 (QDRERERERERERERP) show a composition bias toward basic and acidic residues. 2 C3H1-type zinc fingers span residues 183 to 211 (ILRM…HEDL) and 269 to 297 (YWKT…HGQA).

The sequence is that of Zinc finger CCCH domain-containing protein 39 from Arabidopsis thaliana (Mouse-ear cress).